The primary structure comprises 133 residues: Small ribosomal subunit protein uS11 (133 aa).

It belongs to the universal ribosomal protein uS11 family. As to quaternary structure, part of the 30S ribosomal subunit. Interacts with proteins S7 and S18. Binds to IF-3.

Functionally, located on the platform of the 30S subunit, it bridges several disparate RNA helices of the 16S rRNA. Forms part of the Shine-Dalgarno cleft in the 70S ribosome. The chain is Small ribosomal subunit protein uS11 from Ralstonia nicotianae (strain ATCC BAA-1114 / GMI1000) (Ralstonia solanacearum).